The chain runs to 103 residues: Large ribosomal subunit protein bL21 (103 aa).

The protein belongs to the bacterial ribosomal protein bL21 family. Part of the 50S ribosomal subunit. Contacts protein L20.

Its function is as follows. This protein binds to 23S rRNA in the presence of protein L20. This is Large ribosomal subunit protein bL21 from Rhodococcus erythropolis (strain PR4 / NBRC 100887).